The sequence spans 297 residues: MIMSVPLFHGSIVALLTPMTHGEVNYQEIKNLVEYHIQAGSHGIVAMGTTGESTTLSIDEHVKVIKKTVEFADGRIPIIAGSGSNATSEAVTITKLLNGVGVVGCLSVVPYYNKPTQEGLYLHYKAIAESTELPQILYNVPSRTGCDLKPETIGRLSEIPNIIGVKEATGDLTRLPLIKTLAGEDFIFLSGDDATGLESMKLGGQGVISVTNNLAAADMAKMCELVLAGNFAEAEAINQRLIDLHHDLFIEANPIPVKWAAYKLGLISEPSLRLPLTPLSETAQPTILKALQKAGLI.

Residue Thr50 coordinates pyruvate. Residue Tyr138 is the Proton donor/acceptor of the active site. Lys166 acts as the Schiff-base intermediate with substrate in catalysis. Residue Ile208 participates in pyruvate binding.

Belongs to the DapA family. In terms of assembly, homotetramer; dimer of dimers.

Its subcellular location is the cytoplasm. It catalyses the reaction L-aspartate 4-semialdehyde + pyruvate = (2S,4S)-4-hydroxy-2,3,4,5-tetrahydrodipicolinate + H2O + H(+). The protein operates within amino-acid biosynthesis; L-lysine biosynthesis via DAP pathway; (S)-tetrahydrodipicolinate from L-aspartate: step 3/4. Functionally, catalyzes the condensation of (S)-aspartate-beta-semialdehyde [(S)-ASA] and pyruvate to 4-hydroxy-tetrahydrodipicolinate (HTPA). The chain is 4-hydroxy-tetrahydrodipicolinate synthase from Haemophilus ducreyi (strain 35000HP / ATCC 700724).